We begin with the raw amino-acid sequence, 198 residues long: Recombination protein RecR (198 aa).

A C4-type zinc finger spans residues 56 to 71 (CKICHSLTENEICDIC). Residues 79 to 174 (HLLCVVESPA…HMTRIAQGVP (96 aa)) enclose the Toprim domain.

This sequence belongs to the RecR family.

Its function is as follows. May play a role in DNA repair. It seems to be involved in an RecBC-independent recombinational process of DNA repair. It may act with RecF and RecO. The protein is Recombination protein RecR of Acinetobacter baylyi (strain ATCC 33305 / BD413 / ADP1).